A 35-amino-acid polypeptide reads, in one-letter code: Photosystem II reaction center protein T (35 aa).

Residues 3–23 (ALVYTFLLVSTLGIIFFAIFF) traverse the membrane as a helical segment.

This sequence belongs to the PsbT family. In terms of assembly, PSII is composed of 1 copy each of membrane proteins PsbA, PsbB, PsbC, PsbD, PsbE, PsbF, PsbH, PsbI, PsbJ, PsbK, PsbL, PsbM, PsbT, PsbY, PsbZ, Psb30/Ycf12, at least 3 peripheral proteins of the oxygen-evolving complex and a large number of cofactors. It forms dimeric complexes.

The protein resides in the plastid. It localises to the chloroplast thylakoid membrane. In terms of biological role, found at the monomer-monomer interface of the photosystem II (PS II) dimer, plays a role in assembly and dimerization of PSII. PSII is a light-driven water plastoquinone oxidoreductase, using light energy to abstract electrons from H(2)O, generating a proton gradient subsequently used for ATP formation. This is Photosystem II reaction center protein T from Metasequoia glyptostroboides (Dawn redwood).